A 334-amino-acid polypeptide reads, in one-letter code: Phosphate acyltransferase (334 aa).

This sequence belongs to the PlsX family. In terms of assembly, homodimer. Probably interacts with PlsY.

The protein localises to the cytoplasm. It catalyses the reaction a fatty acyl-[ACP] + phosphate = an acyl phosphate + holo-[ACP]. It participates in lipid metabolism; phospholipid metabolism. Catalyzes the reversible formation of acyl-phosphate (acyl-PO(4)) from acyl-[acyl-carrier-protein] (acyl-ACP). This enzyme utilizes acyl-ACP as fatty acyl donor, but not acyl-CoA. The polypeptide is Phosphate acyltransferase (Acholeplasma laidlawii (strain PG-8A)).